Consider the following 231-residue polypeptide: uncharacterized protein (231 aa).

Residue 10–34 (VVTGAGSGIGEAIATLLHEEGAKVV) participates in NADP(+) binding. Substrate is bound at residue serine 140. The active-site Proton acceptor is tyrosine 153.

It belongs to the short-chain dehydrogenases/reductases (SDR) family.

This is an uncharacterized protein from Staphylococcus aureus (strain MRSA252).